Here is a 126-residue protein sequence, read N- to C-terminus: Large-conductance mechanosensitive channel (126 aa).

The next 2 helical transmembrane spans lie at 8–28 (FAMRGNVIDLAVAVVLGAAFT) and 70–90 (IQQIVSFFLIAIALFLIVKVI).

The protein belongs to the MscL family. In terms of assembly, homopentamer.

Its subcellular location is the cell membrane. In terms of biological role, channel that opens in response to stretch forces in the membrane lipid bilayer. May participate in the regulation of osmotic pressure changes within the cell. This chain is Large-conductance mechanosensitive channel, found in Exiguobacterium sp. (strain ATCC BAA-1283 / AT1b).